The chain runs to 834 residues: Serine/threonine-protein kinase TNNI3K (834 aa).

A lipid anchor (N-myristoyl glycine) is attached at Gly2. A coiled-coil region spans residues 21 to 49; the sequence is SESYAIIIERLEDDLQIKENEFQELRHIF. 10 ANK repeats span residues 66-96, 100-129, 133-162, 166-195, 199-229, 233-262, 268-297, 303-334, 338-367, and 380-409; these read RGLS…RPSR, NGFP…DVQQ, GGLT…NVNV, VFFT…DVNV, VGDR…DVNA, EDHV…EVQP, YGDT…TESL, FSET…NINH, DGHT…DMNL, and DEQT…PQDE. A Protein kinase domain is found at 462-722; the sequence is IEFHEIIGSG…EVVRKLEECL (261 aa). Residues 468–476 and Lys489 each bind ATP; that span reads IGSGSFGKV. The Proton acceptor role is filled by Asp587. Residues 815-834 form a disordered region; the sequence is PMSPMHLHSRRNSGSFEDGN.

It belongs to the protein kinase superfamily. TKL Ser/Thr protein kinase family. MAP kinase kinase kinase subfamily. Interacts with TNNI3, ACTC, ACTA1, MYBPC3, AIP, FABP3 and HADHB. The cofactor is Mg(2+). In terms of processing, autophosphorylated.

Its subcellular location is the nucleus. It localises to the cytoplasm. It carries out the reaction L-seryl-[protein] + ATP = O-phospho-L-seryl-[protein] + ADP + H(+). The enzyme catalyses L-threonyl-[protein] + ATP = O-phospho-L-threonyl-[protein] + ADP + H(+). Functionally, may play a role in cardiac physiology. The chain is Serine/threonine-protein kinase TNNI3K from Mus musculus (Mouse).